A 507-amino-acid polypeptide reads, in one-letter code: Maturase K (507 aa).

The protein belongs to the intron maturase 2 family. MatK subfamily.

The protein resides in the plastid. Its subcellular location is the chloroplast. Usually encoded in the trnK tRNA gene intron. Probably assists in splicing its own and other chloroplast group II introns. In Kalmia buxifolia (Sand myrtle), this protein is Maturase K.